A 346-amino-acid chain; its full sequence is Sulfate/thiosulfate import ATP-binding protein CysA 1 (346 aa).

Residues 3 to 237 (VKVSGITKQF…PNSPFVFSFI (235 aa)) form the ABC transporter domain. 35 to 42 (GPSGSGKT) contributes to the ATP binding site.

This sequence belongs to the ABC transporter superfamily. Sulfate/tungstate importer (TC 3.A.1.6) family. The complex is composed of two ATP-binding proteins (CysA), two transmembrane proteins (CysT and CysW) and a solute-binding protein (CysP).

The protein resides in the cell inner membrane. It carries out the reaction sulfate(out) + ATP + H2O = sulfate(in) + ADP + phosphate + H(+). It catalyses the reaction thiosulfate(out) + ATP + H2O = thiosulfate(in) + ADP + phosphate + H(+). Part of the ABC transporter complex CysAWTP involved in sulfate/thiosulfate import. Responsible for energy coupling to the transport system. The chain is Sulfate/thiosulfate import ATP-binding protein CysA 1 from Agrobacterium fabrum (strain C58 / ATCC 33970) (Agrobacterium tumefaciens (strain C58)).